We begin with the raw amino-acid sequence, 367 residues long: tRNA-specific 2-thiouridylase MnmA 2 (367 aa).

ATP-binding positions include 10–17 (GMSGGVDS) and Met36. The tract at residues 96–98 (NPD) is interaction with target base in tRNA. Cys101 functions as the Nucleophile in the catalytic mechanism. Cys101 and Cys197 are disulfide-bonded. Residue Gly125 coordinates ATP. The interaction with tRNA stretch occupies residues 147-149 (KDQ). Cys197 serves as the catalytic Cysteine persulfide intermediate. Residues 314–315 (RY) form an interaction with tRNA region.

This sequence belongs to the MnmA/TRMU family.

The protein localises to the cytoplasm. The enzyme catalyses S-sulfanyl-L-cysteinyl-[protein] + uridine(34) in tRNA + AH2 + ATP = 2-thiouridine(34) in tRNA + L-cysteinyl-[protein] + A + AMP + diphosphate + H(+). Functionally, catalyzes the 2-thiolation of uridine at the wobble position (U34) of tRNA, leading to the formation of s(2)U34. The polypeptide is tRNA-specific 2-thiouridylase MnmA 2 (Aliarcobacter butzleri (strain RM4018) (Arcobacter butzleri)).